Consider the following 166-residue polypeptide: Glutamyl-tRNA(Gln) amidotransferase subunit C, mitochondrial (166 aa).

The transit peptide at 1-44 (MIRGWTIFTLCKPSALVGSSHFNKQFNWAKSQLQFATKVPQQPY) directs the protein to the mitochondrion.

The protein belongs to the GatC family. As to quaternary structure, subunit of the heterotrimeric GatCAB amidotransferase (AdT) complex, composed of A, B and C subunits.

It localises to the mitochondrion. It catalyses the reaction L-glutamyl-tRNA(Gln) + L-glutamine + ATP + H2O = L-glutaminyl-tRNA(Gln) + L-glutamate + ADP + phosphate + H(+). Functionally, allows the formation of correctly charged Gln-tRNA(Gln) through the transamidation of misacylated Glu-tRNA(Gln) in the mitochondria. The reaction takes place in the presence of glutamine and ATP through an activated gamma-phospho-Glu-tRNA(Gln). This is Glutamyl-tRNA(Gln) amidotransferase subunit C, mitochondrial from Anopheles darlingi (Mosquito).